A 275-amino-acid polypeptide reads, in one-letter code: MFTSLRFLCFGNTPLPSLNSSRSPQRTPSLGSSSTSSLSPIEEELATPSTPESNDSGLTLSSSIGPYPIPSSLMREVESIRSHILQQKSRHQNQPSRRHKQKNRRQRLQEVAIKQSIASSIREKAKPIATPTCYYDVSSPYAEDTSVFELNPAGEKNTNEEEEFGIASQHDWDEMINPHYNYLGAQEQIWDGDLDSSAYWGLDDLISQGYFETYDNSSVVCHPKQDANTDESYSISKALTISRNVKQPNGDTGWWLVKHVDPRALSKLGSDCVIL.

2 disordered regions span residues 13 to 65 and 84 to 108; these read TPLP…SSIG and ILQQKSRHQNQPSRRHKQKNRRQRL. Residues 14-26 are compositionally biased toward polar residues; it reads PLPSLNSSRSPQR. Low complexity predominate over residues 27 to 40; the sequence is TPSLGSSSTSSLSP. The span at 47 to 60 shows a compositional bias: polar residues; it reads TPSTPESNDSGLTL. Residues 88 to 106 are compositionally biased toward basic residues; sequence KSRHQNQPSRRHKQKNRRQ.

In terms of biological role, regulatory protein; part of the gene cluster that mediates the biosynthesis of sesquiterpenyl epoxy-cyclohexenoids (SECs) such as anthrobotrisins and arthrosporols, metabolites that possess a novel hybrid carbon skeleton consisting of a polyketide-derived epoxycyclohexenol combined with a terpenoid-derived monocyclic sesquiterpenol substructure (PKS-PTS hybrid). The SEC pathway plays an important role for fungal soil colonization via decreasing fungal nematode-capturing ability. AOL_s00215g275 can perform multiple functions in fungal growth and development via regulating the SEC biosynthesis, TCA cycle, and septa formation. Also involved in inhibiting conidial formation, germination, and nematicidal activity but promotes trap production. Plays a role in fungal resistances and significantly regulates the fungal morphology and responses to chemical stressors such as cell-wall-perturbing agents (SDS and Congo red), osmotic agents (NaCl and sorbitol), or the oxidant H(2)O(2). This is Transcription regulator AOL_s00215g275 from Arthrobotrys oligospora (strain ATCC 24927 / CBS 115.81 / DSM 1491) (Nematode-trapping fungus).